A 217-amino-acid chain; its full sequence is Ribosomal RNA small subunit methyltransferase G (217 aa).

S-adenosyl-L-methionine is bound by residues G85, L90, 135-136 (IE), and R149.

Belongs to the methyltransferase superfamily. RNA methyltransferase RsmG family.

It is found in the cytoplasm. It catalyses the reaction guanosine(527) in 16S rRNA + S-adenosyl-L-methionine = N(7)-methylguanosine(527) in 16S rRNA + S-adenosyl-L-homocysteine. Specifically methylates the N7 position of guanine in position 527 of 16S rRNA. The chain is Ribosomal RNA small subunit methyltransferase G from Acidiphilium cryptum (strain JF-5).